The chain runs to 573 residues: Estrogen receptor beta (573 aa).

Residues 15 to 170 form a modulating region; sequence QEVDSSKVGE…CFAGKGDMHF (156 aa). 2 consecutive NR C4-type zinc fingers follow at residues 171–191 and 207–231; these read CAVCHDYASGYHYGVWSCEGC and CPATNQCTIDKNRRKSCQACRLRKC. The nuclear receptor DNA-binding region spans 171–236; the sequence is CAVCHDYASG…RLRKCYEVGM (66 aa). The NR LBD domain occupies 291–527; the sequence is TPEQLINRII…DLLLEMLDAN (237 aa). Low complexity-rich tracts occupy residues 534-552 and 559-573; these read MSASYSSQPSPWSQAAQSQ and CSGECPCPPKESSTI. A disordered region spans residues 534–573; it reads MSASYSSQPSPWSQAAQSQPGPPPSCSGECPCPPKESSTI.

Belongs to the nuclear hormone receptor family. NR3 subfamily. In terms of assembly, binds DNA as a homodimer. Can form a heterodimer with ER-alpha. In terms of tissue distribution, liver.

It is found in the nucleus. Binds estrogens with an affinity similar to that of ER-alpha, and activates expression of reporter genes containing estrogen response elements (ERE) in an estrogen-dependent manner. The chain is Estrogen receptor beta (esr2) from Anguilla japonica (Japanese eel).